Here is a 76-residue protein sequence, read N- to C-terminus: Heat shock factor-binding protein 1 (76 aa).

This sequence belongs to the HSBP1 family. In terms of assembly, homohexamer. Associates with heptad repeats of HSF1 trimers and probably also HSF1 monomers, and with HSP70. Association with HSF1 trimers and HSP70 coincides with attenuation of heat shock response and the conversion of HSF1 trimer to monomer.

The protein localises to the nucleus. In terms of biological role, negative regulator of the heat shock response. Negatively affects HSF1 DNA-binding activity. May have a role in the suppression of the activation of the stress response during the aging process. The chain is Heat shock factor-binding protein 1 (Hsbp1) from Mus musculus (Mouse).